Consider the following 1843-residue polypeptide: Protein TIC 214 (1843 aa).

The next 6 membrane-spanning stretches (helical) occupy residues 18 to 38, 64 to 84, 87 to 107, 124 to 144, 172 to 192, and 217 to 237; these read IINS…FSIG, FITG…HLAL, PHTI…WNNH, LSIQ…HFIL, VGWL…LFWI, and IFSI…PSPI. Disordered stretches follow at residues 244–281, 557–576, 582–647, 724–744, and 1527–1586; these read ETSK…AAEK, EEIE…SRKA, FTDN…DEVA, NSEE…RQEN, and SLEL…KKKK. Residues 251 to 264 are compositionally biased toward acidic residues; sequence REESEEETDVEIET. Basic and acidic residues predominate over residues 269–281; sequence KGTKQEQEGAAEK. Positions 590-639 are enriched in low complexity; sequence NTPTSTTETTSTAETTSTTETTSTTKNTSTTKNTSTTETTSTTENENTSN. Composition is skewed to basic and acidic residues over residues 730–744 and 1527–1540; these read TKEK…RQEN and SLEL…KKPA. Residues 1543-1562 show a composition bias toward polar residues; it reads NIGSDTQKQGNPGSDPSTQQ. The span at 1563–1580 shows a compositional bias: basic and acidic residues; that stretch reads KDIKKNVKEDYDGRSDIQ.

It belongs to the TIC214 family. In terms of assembly, part of the Tic complex.

The protein resides in the plastid. It is found in the chloroplast inner membrane. Its function is as follows. Involved in protein precursor import into chloroplasts. May be part of an intermediate translocation complex acting as a protein-conducting channel at the inner envelope. This Nandina domestica (Heavenly bamboo) protein is Protein TIC 214.